The sequence spans 1463 residues: Collagen alpha-1(I) chain (1463 aa).

Residues 1-22 form the signal peptide; the sequence is MFSFVDLRLLLLLAATALLTHG. Residues 23-161 constitute a propeptide, N-terminal propeptide; that stretch reads QEEGQEEGQE…PPGLGGNFAP (139 aa). The VWFC domain occupies 38-96; it reads VTCVQNGLRYHDRDVWKPVPCQICVCDNGNVLCDDVICDELKDCPNAKVPTDECCPVCP. The segment at 98-1217 is disordered; that stretch reads GQESPTDQET…AHDGGRYYRA (1120 aa). Positions 138-153 are enriched in pro residues; that stretch reads PGLPGPPGPPGPPGPP. A Pyrrolidone carboxylic acid modification is found at Gln-162. The nonhelical region (N-terminal) stretch occupies residues 162–177; the sequence is QLSYGYDEKSTGISVP. Lys-170 is subject to Allysine. Residue Ser-171 is modified to Phosphoserine. Residues 178–1191 are triple-helical region; the sequence is GPMGPSGPRG…PGPPGPPGPP (1014 aa). A 4-hydroxyproline mark is found at Pro-189, Pro-192, Pro-195, Pro-204, Pro-207, Pro-210, Pro-225, Pro-240, Pro-246, Pro-255, and Pro-261. Low complexity predominate over residues 197–216; sequence PQGFQGPPGEPGEPGASGPM. The segment covering 228-242 has biased composition (basic and acidic residues); that stretch reads NGDDGEAGKPGRPGE. Lys-264 is subject to 5-hydroxylysine; alternate. An O-linked (Gal...) hydroxylysine; alternate glycan is attached at Lys-264. At Ser-270 the chain carries Phosphoserine. 5-hydroxylysine is present on residues Lys-276 and Lys-285. Positions 278-294 are enriched in low complexity; the sequence is DAGPAGPKGEPGSPGEN. 4-hydroxyproline occurs at positions 288, 291, 297, 306, and 312. Low complexity predominate over residues 317-330; it reads PAGARGNDGATGAA. The segment covering 332-344 has biased composition (pro residues); sequence PPGPTGPAGPPGF. Residues Pro-333, Pro-342, and Pro-345 each carry the 4-hydroxyproline modification. Residues 349–358 show a composition bias toward gly residues; that stretch reads GAKGEGGPQG. Pro-372, Pro-375, Pro-387, Pro-393, Pro-402, Pro-408, Pro-411, and Pro-426 each carry 4-hydroxyproline. Over residues 378–417 the composition is skewed to low complexity; sequence AGAAGPAGNPGADGQPGAKGANGAPGIAGAPGFPGARGPS. Lys-429 carries the 5-hydroxylysine modification. Residues Pro-435, Pro-438, Pro-450, Pro-459, Pro-474, Pro-480, Pro-489, and Pro-495 each carry the 4-hydroxyproline modification. Residues 484 to 493 are compositionally biased toward gly residues; it reads GERGGPGSRG. A compositionally biased stretch (low complexity) spans 494–525; sequence FPGADGVAGPKGPAGERGAPGPAGPKGSPGEA. At Lys-504 the chain carries 5-hydroxylysine. 4-hydroxyproline occurs at positions 513, 522, 528, 534, 543, 546, 555, 564, 570, 582, 591, 600, 603, 621, 639, 645, 651, 657, 663, 669, 681, 690, 702, 714, 717, 723, 729, and 738. Residues 537–563 show a composition bias toward low complexity; sequence KGLTGSPGSPGPDGKTGPPGPAGQDGR. Over residues 572–591 the composition is skewed to low complexity; that stretch reads ARGQAGVMGFPGPKGAAGEP. The span at 633–660 shows a compositional bias: low complexity; sequence QGPAGSPGFQGLPGPAGPPGEAGKPGEQ. Low complexity predominate over residues 695–723; the sequence is PRGANGAPGNDGAKGDAGAPGAPGSQGAP. The short motif at 744-746 is the Cell attachment site element; it reads RGD. At Lys-750 the chain carries 5-hydroxylysine. 3 positions are modified to 4-hydroxyproline: Pro-756, Pro-771, and Pro-777. Over residues 783–797 the composition is skewed to low complexity; the sequence is AGPSGPAGPTGARGA. Ser-786 is modified (phosphoserine). 4-hydroxyproline is present on residues Pro-798, Pro-804, Pro-807, Pro-816, Pro-822, Pro-840, Pro-849, and Pro-858. A compositionally biased stretch (low complexity) spans 810–837; sequence AGFAGPPGADGQPGAKGEPGDAGAKGDA. Positions 839 to 851 are enriched in pro residues; the sequence is PPGPAGPAGPPGP. Positions 852-882 are enriched in low complexity; sequence IGNVGAPGPKGARGSAGPPGATGFPGAAGRV. Lys-861 bears the 5-hydroxylysine mark. 4-hydroxyproline occurs at positions 870 and 876. Pro-884 carries the post-translational modification 3-hydroxyproline. 16 positions are modified to 4-hydroxyproline: Pro-885, Pro-894, Pro-897, Pro-918, Pro-927, Pro-936, Pro-945, Pro-963, Pro-972, Pro-975, Pro-981, Pro-996, Pro-1002, Pro-1008, Pro-1017, and Pro-1023. A compositionally biased stretch (low complexity) spans 930-954; the sequence is AGEKGAPGADGPAGAPGTPGPQGIA. Residues 995–1005 show a composition bias toward pro residues; that stretch reads PPGPMGPPGLA. Lys-1032 is modified (5-hydroxylysine). Residues 1041-1056 are compositionally biased toward pro residues; it reads AGPPGAPGAPGAPGPV. Pro-1044, Pro-1047, and Pro-1050 each carry 4-hydroxyproline. A compositionally biased stretch (low complexity) spans 1077 to 1091; it reads IGPVGARGPAGPQGP. The short motif at 1092–1094 is the Cell attachment site element; sequence RGD. Positions 1092-1106 are enriched in basic and acidic residues; that stretch reads RGDKGETGEQGDRGI. A 5-hydroxylysine modification is found at Lys-1095. A 5-hydroxylysine; alternate modification is found at Lys-1107. Lys-1107 is a glycosylation site (O-linked (Gal...) hydroxylysine; alternate). Residues Pro-1119, Pro-1122, Pro-1125, Pro-1143, and Pro-1158 each carry the 4-hydroxyproline modification. Residues 1125–1149 show a composition bias toward low complexity; sequence PGEQGPSGASGPAGPRGPPGSAGSP. Pro-1163 bears the 3-hydroxyproline mark. Pro-1164 is modified (4-hydroxyproline). The span at 1176-1191 shows a compositional bias: pro residues; sequence AGPPGPPGPPGPPGPP. At Pro-1178 the chain carries 3-hydroxyproline. 4-hydroxyproline is present on Pro-1179. Position 1181 is a 3-hydroxyproline (Pro-1181). At Pro-1182 the chain carries 4-hydroxyproline. 3-hydroxyproline is present on Pro-1184. 4-hydroxyproline occurs at positions 1185, 1188, and 1191. Residues 1192–1215 form a nonhelical region (C-terminal) region; sequence SGGYDLSFLPQPPQEKAHDGGRYY. Positions 1206–1217 are enriched in basic and acidic residues; that stretch reads EKAHDGGRYYRA. At Lys-1207 the chain carries Allysine. A propeptide spans 1218–1463 (C-terminal propeptide); that stretch reads DDANVVRDRD…GFDVGPACFL (246 aa). Positions 1228–1463 constitute a Fibrillar collagen NC1 domain; it reads LEVDTTLKSL…GFDVGPACFL (236 aa). 3 cysteine pairs are disulfide-bonded: Cys-1258–Cys-1290, Cys-1298–Cys-1461, and Cys-1369–Cys-1414. Residues Asp-1276, Asn-1278, Gln-1279, Cys-1281, and Asp-1284 each contribute to the Ca(2+) site.

Belongs to the fibrillar collagen family. Trimers of one alpha 2(I) and two alpha 1(I) chains. Interacts with MRC2. Interacts with TRAM2. Interacts with MFAP4 in a Ca (2+)-dependent manner. Contains mostly 4-hydroxyproline. Proline residues at the third position of the tripeptide repeating unit (G-X-Y) are hydroxylated in some or all of the chains. In terms of processing, contains 3-hydroxyproline at a few sites. This modification occurs on the first proline residue in the sequence motif Gly-Pro-Hyp, where Hyp is 4-hydroxyproline. Post-translationally, lysine residues at the third position of the tripeptide repeating unit (G-X-Y) are 5-hydroxylated in some or all of the chains. O-glycosylated on hydroxylated lysine residues. The O-linked glycan consists of a Glc-Gal disaccharide. In terms of tissue distribution, forms the fibrils of tendon, ligaments and bones. In bones the fibrils are mineralized with calcium hydroxyapatite.

It is found in the secreted. The protein resides in the extracellular space. Its subcellular location is the extracellular matrix. In terms of biological role, type I collagen is a member of group I collagen (fibrillar forming collagen). This chain is Collagen alpha-1(I) chain (COL1A1), found in Bos taurus (Bovine).